A 536-amino-acid chain; its full sequence is UDP-glucuronosyltransferase 2A2 (536 aa).

Over 1–15 (MVSIRDFTMPKKFVQ) the chain is Cytoplasmic. Residues 16–36 (MLVFNLTLTEVVLSGNVLIWP) form a helical membrane-spanning segment. Residues 37–500 (TDGSHWLNIK…TWFQYHSLDV (464 aa)) are Lumenal-facing. N58, N322, and N356 each carry an N-linked (GlcNAc...) asparagine glycan. Residues 501-521 (IGFLLVCVTTAIFLVIQCCLF) form a helical membrane-spanning segment. Over 522-536 (SCQKFGKIGKKKKRE) the chain is Cytoplasmic.

This sequence belongs to the UDP-glycosyltransferase family. Mainly expressed in the nasal mucosa.

The protein localises to the endoplasmic reticulum membrane. The catalysed reaction is glucuronate acceptor + UDP-alpha-D-glucuronate = acceptor beta-D-glucuronoside + UDP + H(+). It carries out the reaction 17alpha-estradiol + UDP-alpha-D-glucuronate = 17alpha-estradiol 3-O-(beta-D-glucuronate) + UDP + H(+). It catalyses the reaction 17beta-estradiol + UDP-alpha-D-glucuronate = 17beta-estradiol 3-O-(beta-D-glucuronate) + UDP + H(+). The enzyme catalyses chenodeoxycholate + UDP-alpha-D-glucuronate = chenodeoxycholoyl-24-O-(beta-D-glucuronate) + UDP. The catalysed reaction is lithocholate + UDP-alpha-D-glucuronate = lithocholoyl-24-O-(beta-D-glucuronate) + UDP. It carries out the reaction deoxycholate + UDP-alpha-D-glucuronate = deoxycholoyl-24-O-(beta-D-glucuronate) + UDP. It catalyses the reaction hyocholate + UDP-alpha-D-glucuronate = hyocholoyl-24-O-(beta-D-glucuronate) + UDP. The enzyme catalyses hyodeoxycholate + UDP-alpha-D-glucuronate = hyodeoxycholate 6-O-(beta-D-glucuronate) + UDP + H(+). UDP-glucuronosyltransferase (UGT) that catalyzes phase II biotransformation reactions in which lipophilic substrates are conjugated with glucuronic acid to increase the metabolite's water solubility, thereby facilitating excretion into either the urine or bile. Essential for the elimination and detoxification of drugs, xenobiotics and endogenous compounds. Catalyzes the glucuronidation of endogenous estrogen hormone estradiol. Contributes to bile acid (BA) detoxification by catalyzing the glucuronidation of BA substrates, which are natural detergents for dietary lipids absorption. Shows a potential role in detoxification of toxic waste compounds in the amniotic fluid before birth, and air-born chemical after birth. In Homo sapiens (Human), this protein is UDP-glucuronosyltransferase 2A2.